The sequence spans 337 residues: Histidine N-acetyltransferase (337 aa).

The propeptide at 1 to 2 (MK) is removed in mature form. The N-acetyltransferase domain maps to 21 to 156 (LQFAVATEED…QGILLVRFRA (136 aa)).

It catalyses the reaction L-histidine + acetyl-CoA = N(alpha)-acetyl-L-histidine + CoA + H(+). Functionally, enzyme responsible for the N-acetyl-histidine (NAH) synthesis, which is a major constituent of brain and lens of ectothermic vertebrates. This Scomber australasicus (Blue mackerel) protein is Histidine N-acetyltransferase (hisat).